A 303-amino-acid chain; its full sequence is Biphenyl-2,3-diol 1,2-dioxygenase (303 aa).

VOC domains follow at residues 5–119 (SLGY…IYYG) and 143–264 (GLGH…YGWS). Histidine 146, histidine 210, and glutamate 260 together coordinate Fe cation. The disordered stretch occupies residues 283–303 (WGHKSVRDKALRATKHEQQPE). The segment covering 287–303 (SVRDKALRATKHEQQPE) has biased composition (basic and acidic residues).

Belongs to the extradiol ring-cleavage dioxygenase family. In terms of assembly, homooctamer. Fe(2+) serves as cofactor.

The enzyme catalyses biphenyl-2,3-diol + O2 = 2-hydroxy-6-oxo-6-phenylhexa-2,4-dienoate + H(+). It participates in xenobiotic degradation; biphenyl degradation; 2-hydroxy-2,4-pentadienoate and benzoate from biphenyl: step 3/4. In Metapseudomonas furukawaii (Pseudomonas furukawaii), this protein is Biphenyl-2,3-diol 1,2-dioxygenase (bphC).